The following is a 131-amino-acid chain: Methylglyoxal synthase (131 aa).

Residues 1–131 (MKIALIAHDK…GDLDYRKFRK (131 aa)) form the MGS-like domain. Residues H8, K12, 34–37 (TGTT), and 54–55 (SG) contribute to the substrate site. Catalysis depends on D60, which acts as the Proton donor/acceptor. Residue H87 coordinates substrate.

Belongs to the methylglyoxal synthase family.

The enzyme catalyses dihydroxyacetone phosphate = methylglyoxal + phosphate. In terms of biological role, catalyzes the formation of methylglyoxal from dihydroxyacetone phosphate. The polypeptide is Methylglyoxal synthase (Bacillus cytotoxicus (strain DSM 22905 / CIP 110041 / 391-98 / NVH 391-98)).